The sequence spans 95 residues: Protein TusB (95 aa).

It belongs to the DsrH/TusB family. In terms of assembly, heterohexamer, formed by a dimer of trimers. The hexameric TusBCD complex contains 2 copies each of TusB, TusC and TusD. The TusBCD complex interacts with TusE.

It is found in the cytoplasm. Part of a sulfur-relay system required for 2-thiolation of 5-methylaminomethyl-2-thiouridine (mnm(5)s(2)U) at tRNA wobble positions. The sequence is that of Protein TusB from Klebsiella pneumoniae (strain 342).